The sequence spans 584 residues: Aspartate--tRNA ligase (584 aa).

E169 contacts L-aspartate. The tract at residues 193–196 (QLFK) is aspartate. R215 contributes to the L-aspartate binding site. ATP contacts are provided by residues 215–217 (RDE) and Q224. Residue H446 participates in L-aspartate binding. E480 lines the ATP pocket. R487 contributes to the L-aspartate binding site. 532–535 (GLDR) provides a ligand contact to ATP.

This sequence belongs to the class-II aminoacyl-tRNA synthetase family. Type 1 subfamily. In terms of assembly, homodimer.

Its subcellular location is the cytoplasm. The catalysed reaction is tRNA(Asp) + L-aspartate + ATP = L-aspartyl-tRNA(Asp) + AMP + diphosphate. Catalyzes the attachment of L-aspartate to tRNA(Asp) in a two-step reaction: L-aspartate is first activated by ATP to form Asp-AMP and then transferred to the acceptor end of tRNA(Asp). This chain is Aspartate--tRNA ligase, found in Buchnera aphidicola subsp. Schizaphis graminum (strain Sg).